The sequence spans 144 residues: 3-dehydroquinate dehydratase (144 aa).

Catalysis depends on Tyr22, which acts as the Proton acceptor. 3 residues coordinate substrate: Asn74, His80, and Asp87. The active-site Proton donor is the His100. Residues 101-102 and Arg111 each bind substrate; that span reads LS.

It belongs to the type-II 3-dehydroquinase family. Homododecamer.

It catalyses the reaction 3-dehydroquinate = 3-dehydroshikimate + H2O. It functions in the pathway metabolic intermediate biosynthesis; chorismate biosynthesis; chorismate from D-erythrose 4-phosphate and phosphoenolpyruvate: step 3/7. Functionally, catalyzes a trans-dehydration via an enolate intermediate. This is 3-dehydroquinate dehydratase from Clostridium perfringens (strain ATCC 13124 / DSM 756 / JCM 1290 / NCIMB 6125 / NCTC 8237 / Type A).